The primary structure comprises 207 residues: MTDPNGPKDIPEQSAEAAEPVVSKPYIMPDDPEPDAVELLAKEAAEARDKMLRTLAEMENLRKRTTREVADARIYGVTAFARDVLEIADNLQRALDAVPAEARANAEPGLKALIDGVELTERSLINALEKNGVKKFDPSGQKFDPNFQQAMYEVPDASVPAGTVVQVVQAGFMLGERVLRPALVGVSKGGAKAAPAAAANGESNSAA.

The tract at residues 1–33 (MTDPNGPKDIPEQSAEAAEPVVSKPYIMPDDPE) is disordered.

It belongs to the GrpE family. Homodimer.

The protein localises to the cytoplasm. Its function is as follows. Participates actively in the response to hyperosmotic and heat shock by preventing the aggregation of stress-denatured proteins, in association with DnaK and GrpE. It is the nucleotide exchange factor for DnaK and may function as a thermosensor. Unfolded proteins bind initially to DnaJ; upon interaction with the DnaJ-bound protein, DnaK hydrolyzes its bound ATP, resulting in the formation of a stable complex. GrpE releases ADP from DnaK; ATP binding to DnaK triggers the release of the substrate protein, thus completing the reaction cycle. Several rounds of ATP-dependent interactions between DnaJ, DnaK and GrpE are required for fully efficient folding. The sequence is that of Protein GrpE from Rhodopseudomonas palustris (strain BisA53).